The following is a 526-amino-acid chain: Cytochrome P450 monooxygenase SAT11 (526 aa).

The helical transmembrane segment at 18 to 38 (AFLLIAMLYLGYLLCICFYNI) threads the bilayer. N125 and N447 each carry an N-linked (GlcNAc...) asparagine glycan. Heme is bound at residue C455. An N-linked (GlcNAc...) asparagine glycan is attached at N520.

The protein belongs to the cytochrome P450 family. Heme serves as cofactor.

It is found in the membrane. It functions in the pathway mycotoxin biosynthesis. In terms of biological role, cytochrome P450 monooxygenase; part of the satratoxin SC2 cluster involved in the biosynthesis of satratoxins, trichothecene mycotoxins that are associated with human food poisonings. Satratoxins are suggested to be made by products of multiple gene clusters (SC1, SC2 and SC3) that encode 21 proteins in all, including polyketide synthases, acetyltransferases, and other enzymes expected to modify the trichothecene skeleton. SC1 encodes 10 proteins, SAT1 to SAT10. The largest are SAT8, which encodes a putative polyketide synthase (PKS) with a conventional non-reducing architecture, and SAT10, a putative protein containing four ankyrin repeats and thus may be involved in protein scaffolding. The putative short-chain reductase SAT3 may assist the PKS in some capacity. SAT6 contains a secretory lipase domain and acts probably as a trichothecene esterase. SAT5 encodes a putative acetyltransferase, and so, with SAT6, may affect endogenous protection from toxicity. The probable transcription factor SAT9 may regulate the expression of the SC1 cluster. SC2 encodes proteins SAT11 to SAT16, the largest of which encodes the putative reducing PKS SAT13. SAT11 is a cytochrome P450 monooxygenase, while SAT14 and SAT16 are probable acetyltransferases. The SC2 cluster may be regulated by the transcription factor SAT15. SC3 is a small cluster that encodes 5 proteins, SAT17 to SAT21. SAT21 is a putative MFS-type transporter which may have a role in exporting secondary metabolites. The four other proteins putatively encoded in SC3 include the taurine hydroxylase-like protein SAT17, the O-methyltransferase SAT18, the acetyltransferase SAT19, and the Cys6-type zinc finger SAT20, the latter being probably involved in regulation of SC3 expression. The protein is Cytochrome P450 monooxygenase SAT11 of Stachybotrys chartarum (strain CBS 109288 / IBT 7711) (Toxic black mold).